The chain runs to 901 residues: Aconitate hydratase A (901 aa).

3 residues coordinate [4Fe-4S] cluster: cysteine 443, cysteine 509, and cysteine 512.

This sequence belongs to the aconitase/IPM isomerase family. Monomer. The cofactor is [4Fe-4S] cluster.

It catalyses the reaction citrate = D-threo-isocitrate. The enzyme catalyses (2S,3R)-3-hydroxybutane-1,2,3-tricarboxylate = 2-methyl-cis-aconitate + H2O. The protein operates within carbohydrate metabolism; tricarboxylic acid cycle; isocitrate from oxaloacetate: step 2/2. Its pathway is organic acid metabolism; propanoate degradation. Involved in the catabolism of short chain fatty acids (SCFA) via the tricarboxylic acid (TCA)(acetyl degradation route) and probably the 2-methylcitrate cycle I (propionate degradation route). Catalyzes the reversible isomerization of citrate to isocitrate via cis-aconitate. Could catalyze the hydration of 2-methyl-cis-aconitate to yield (2R,3S)-2-methylisocitrate. The apo form of AcnA functions as a RNA-binding regulatory protein. The polypeptide is Aconitate hydratase A (acnA) (Staphylococcus aureus (strain MRSA252)).